Here is a 650-residue protein sequence, read N- to C-terminus: Chaperone protein DnaK (650 aa).

Residue Thr200 is modified to Phosphothreonine; by autocatalysis. A disordered region spans residues 613 to 634; sequence QAGAAGAAGAAEGAAHAGGAQQ.

The protein belongs to the heat shock protein 70 family.

Functionally, acts as a chaperone. This Burkholderia vietnamiensis (strain G4 / LMG 22486) (Burkholderia cepacia (strain R1808)) protein is Chaperone protein DnaK.